A 427-amino-acid chain; its full sequence is MESLTLQPIARVDGAINLPGSKSVSNRALLLAALACGKTVLTNLLDSDDVRHMLNALSALGINYTLSADRTRCDITGNGGPLRASGTLELFLGNAGTAMRPLAAALCLGQNEIVLTGEPRMKERPIGHLVDSLRQGGANIDYLEQENYPPLRLRGGFIGGDIEVDGSVSSQFLTALLMTAPLAPEDTIIRVKGELVSKPYIDITLNLMKTFGVEIANHHYQQFVVKGGQQYHSPGRYLVEGDASSASYFLAAGAIKGGTVKVTGIGRKSMQGDIRFADVLEKMGATITWGDDFIACTRGELHAIDMDMNHIPDAAMTIATTALFAKGTTTLRNIYNWRVKETDRLFAMATELRKVGAEVEEGHDYIRITPPAKLQHADIGTYNDHRMAMCFSLVALSDTPVTILDPKCTAKTFPDYFEQLARMSTPA.

Positions 22, 23, and 27 each coordinate 3-phosphoshikimate. Position 22 (K22) interacts with phosphoenolpyruvate. Phosphoenolpyruvate contacts are provided by G96 and R124. The 3-phosphoshikimate site is built by S169, S170, Q171, S197, D313, N336, and K340. A phosphoenolpyruvate-binding site is contributed by Q171. D313 serves as the catalytic Proton acceptor. Phosphoenolpyruvate is bound by residues R344, R386, and K411.

This sequence belongs to the EPSP synthase family. Monomer.

The protein localises to the cytoplasm. It carries out the reaction 3-phosphoshikimate + phosphoenolpyruvate = 5-O-(1-carboxyvinyl)-3-phosphoshikimate + phosphate. Its pathway is metabolic intermediate biosynthesis; chorismate biosynthesis; chorismate from D-erythrose 4-phosphate and phosphoenolpyruvate: step 6/7. Catalyzes the transfer of the enolpyruvyl moiety of phosphoenolpyruvate (PEP) to the 5-hydroxyl of shikimate-3-phosphate (S3P) to produce enolpyruvyl shikimate-3-phosphate and inorganic phosphate. The chain is 3-phosphoshikimate 1-carboxyvinyltransferase from Salmonella typhi.